Reading from the N-terminus, the 126-residue chain is Iron-sulfur cluster insertion protein ErpA (126 aa).

Residues 1–21 (MNQPANQFNPSSSQPVDPTVL) are disordered. Iron-sulfur cluster is bound by residues C54, C118, and C120.

It belongs to the HesB/IscA family. Homodimer. The cofactor is iron-sulfur cluster.

In terms of biological role, required for insertion of 4Fe-4S clusters for at least IspG. The polypeptide is Iron-sulfur cluster insertion protein ErpA (Psychrobacter arcticus (strain DSM 17307 / VKM B-2377 / 273-4)).